We begin with the raw amino-acid sequence, 518 residues long: MIPDVSQALAWLEKHPQALKGIQRGLERETLRVNADGTLATTGHPEALGSALTHKWITTDFAEALLEFITPVDGDIEHMLTFMRDLHRYTARNMGDERMWPLSMPCYIAEGQDIELAQYGTSNTGRFKTLYREGLKNRYGALMQTISGVHYNFSLPMAFWQAKCGDISGADAKEKISAGYFRVIRNYYRFGWVIPYLFGASPAICSSFLQGKPTSLPFEKTECGMYYLPYATSLRLSDLGYTNKSQSNLGITFNDLYEYVAGLKQAIKTPSEEYAKIGIEKDGKRLQINSNVLQIENELYAPIRPKRVTRSGESPSDALLRGGIEYIEVRSLDINPFSPIGVDEQQVRFLDLFMVWCALADAPEMSSSELACTRVNWNRVILEGRKPGLTLGIGCETAQFPLLQVGKDLFRDLKRVAQTLDSINGGDAYQKVCDELVACFDNPDLTFSARILRSMIDTGIGGTGKAFAEAYRNLLREEPLEILREEDFVAEREASERRQQEMETADTEPFAVWLEKHT.

This sequence belongs to the glutamate--cysteine ligase type 1 family. Type 1 subfamily.

The catalysed reaction is L-cysteine + L-glutamate + ATP = gamma-L-glutamyl-L-cysteine + ADP + phosphate + H(+). It functions in the pathway sulfur metabolism; glutathione biosynthesis; glutathione from L-cysteine and L-glutamate: step 1/2. The chain is Glutamate--cysteine ligase from Shigella sonnei (strain Ss046).